We begin with the raw amino-acid sequence, 732 residues long: 1,4-alpha-glucan branching enzyme GlgB 1 (732 aa).

The active-site Nucleophile is D411. The active-site Proton donor is E464.

Belongs to the glycosyl hydrolase 13 family. GlgB subfamily. In terms of assembly, monomer.

The catalysed reaction is Transfers a segment of a (1-&gt;4)-alpha-D-glucan chain to a primary hydroxy group in a similar glucan chain.. Its pathway is glycan biosynthesis; glycogen biosynthesis. In terms of biological role, catalyzes the formation of the alpha-1,6-glucosidic linkages in glycogen by scission of a 1,4-alpha-linked oligosaccharide from growing alpha-1,4-glucan chains and the subsequent attachment of the oligosaccharide to the alpha-1,6 position. The protein is 1,4-alpha-glucan branching enzyme GlgB 1 of Xanthomonas oryzae pv. oryzae (strain KACC10331 / KXO85).